A 667-amino-acid polypeptide reads, in one-letter code: UvrABC system protein B (667 aa).

The Helicase ATP-binding domain maps to 31-414 (KNFEAGAKAQ…EAEQTDIQVD (384 aa)). Position 44–51 (44–51 (GATGTGKT)) interacts with ATP. A Beta-hairpin motif is present at residues 97–120 (YYDYYQPEAYVPSSDTYIEKDSSI). The Helicase C-terminal domain occupies 435–597 (QIDDLVGEIN…ITPKTIIKPI (163 aa)). One can recognise a UVR domain in the interval 630-665 (LEMVERLSEQMRLAAKKLDFEQAATLRDTILELKSE).

The protein belongs to the UvrB family. Forms a heterotetramer with UvrA during the search for lesions. Interacts with UvrC in an incision complex.

The protein resides in the cytoplasm. The UvrABC repair system catalyzes the recognition and processing of DNA lesions. A damage recognition complex composed of 2 UvrA and 2 UvrB subunits scans DNA for abnormalities. Upon binding of the UvrA(2)B(2) complex to a putative damaged site, the DNA wraps around one UvrB monomer. DNA wrap is dependent on ATP binding by UvrB and probably causes local melting of the DNA helix, facilitating insertion of UvrB beta-hairpin between the DNA strands. Then UvrB probes one DNA strand for the presence of a lesion. If a lesion is found the UvrA subunits dissociate and the UvrB-DNA preincision complex is formed. This complex is subsequently bound by UvrC and the second UvrB is released. If no lesion is found, the DNA wraps around the other UvrB subunit that will check the other stand for damage. The protein is UvrABC system protein B of Latilactobacillus sakei subsp. sakei (strain 23K) (Lactobacillus sakei subsp. sakei).